The sequence spans 52 residues: Unknown protein from spot 415 of 2D-PAGE of etiolated coleoptile (52 aa).

This chain is Unknown protein from spot 415 of 2D-PAGE of etiolated coleoptile, found in Zea mays (Maize).